A 540-amino-acid polypeptide reads, in one-letter code: Phosphoenolpyruvate carboxykinase (ATP) (540 aa).

Residue Arg-65 coordinates substrate. Residue Lys-87 is modified to N6-acetyllysine. Positions 207 and 213 each coordinate substrate. Residues Lys-213, His-232, and 248–256 (GLSGTGKTT) contribute to the ATP site. The Mn(2+) site is built by Lys-213 and His-232. Residue Asp-269 coordinates Mn(2+). ATP-binding positions include Glu-297, Arg-333, 449-450 (RI), and Thr-455. Residue Arg-333 participates in substrate binding. Lys-523 carries the post-translational modification N6-acetyllysine.

It belongs to the phosphoenolpyruvate carboxykinase (ATP) family. In terms of assembly, monomer. It depends on Mn(2+) as a cofactor.

The protein resides in the cytoplasm. It carries out the reaction oxaloacetate + ATP = phosphoenolpyruvate + ADP + CO2. It functions in the pathway carbohydrate biosynthesis; gluconeogenesis. Involved in the gluconeogenesis. Catalyzes the conversion of oxaloacetate (OAA) to phosphoenolpyruvate (PEP) through direct phosphoryl transfer between the nucleoside triphosphate and OAA. This chain is Phosphoenolpyruvate carboxykinase (ATP), found in Shigella flexneri.